The following is a 118-amino-acid chain: Basic phospholipase A2 CM-II (118 aa).

7 disulfide bridges follow: Cys-11-Cys-70, Cys-26-Cys-117, Cys-28-Cys-44, Cys-43-Cys-98, Cys-50-Cys-91, Cys-59-Cys-84, and Cys-77-Cys-89. The Ca(2+) site is built by Tyr-27, Gly-29, and Gly-31. The active site involves His-47. Asp-48 provides a ligand contact to Ca(2+). Asp-92 is an active-site residue.

Belongs to the phospholipase A2 family. Group I subfamily. D49 sub-subfamily. Requires Ca(2+) as cofactor. As to expression, expressed by the venom gland.

It is found in the secreted. The catalysed reaction is a 1,2-diacyl-sn-glycero-3-phosphocholine + H2O = a 1-acyl-sn-glycero-3-phosphocholine + a fatty acid + H(+). Snake venom phospholipase A2 (PLA2) that causes myonecrosis when injected intramuscularly, causes neuromuscular blockade with a gradual contracture and a decreased sensitivity to ACh and KCl (in the chick biventer cervicis nerve-muscle preparation), abolishes twitches evoked by indirect stimulation earlier than those by direct stimulation (in the mouse phrenic nerve-diaphragm preparation), shows indirect hemolytic activity, and shows weak anticoagulant activity. PLA2 catalyzes the calcium-dependent hydrolysis of the 2-acyl groups in 3-sn-phosphoglycerides. This Naja mossambica (Mozambique spitting cobra) protein is Basic phospholipase A2 CM-II.